The chain runs to 409 residues: Broad specificity amino-acid racemase (409 aa).

A signal peptide spans 1 to 23 (MPFSRTLLALSLGMALLQNPAFA). Residues Cys70 and Cys96 are joined by a disulfide bond. Lys74 (proton acceptor) is an active-site residue. N6-(pyridoxal phosphate)lysine is present on Lys74. Arg173 provides a ligand contact to substrate. Tyr300 acts as the Proton acceptor in catalysis. Met348 contacts substrate.

Belongs to the alanine racemase family. Bsr subfamily. As to quaternary structure, homodimer. Requires pyridoxal 5'-phosphate as cofactor.

Its subcellular location is the periplasm. The enzyme catalyses an L-alpha-amino acid = a D-alpha-amino acid. The catalysed reaction is L-lysine = D-lysine. It catalyses the reaction L-arginine = D-arginine. It carries out the reaction L-ornithine = D-ornithine. The enzyme catalyses L-alanine = D-alanine. The catalysed reaction is L-methionine = D-methionine. Amino-acid racemase able to utilize a broad range of substrates. Is mostly active with lysine and arginine and, to a lesser extent, with ornithine, whereas is about 10 times less active with alanine, methionine and ethionine. With phenylalanine as substrate only a trace activity is detectable, and is inactive with glutamate. Plays a key role in the catabolism of D-arginine and D-lysine, that allows P.taetrolens strain NBRC 3460 to grow on these basic D-amino acids as a sole carbon source. This Pseudomonas taetrolens protein is Broad specificity amino-acid racemase.